Reading from the N-terminus, the 513-residue chain is Ribonuclease Y (513 aa).

A helical transmembrane segment spans residues 4–24 (NTAIIIAITTGFVAFIGGYFL). The KH domain maps to 203–266 (TVAVIPLPNE…ETARMALEKL (64 aa)). In terms of domain architecture, HD spans 329–422 (VLKHSVEVAY…IQAADAISAA (94 aa)).

The protein belongs to the RNase Y family.

The protein localises to the cell membrane. Endoribonuclease that initiates mRNA decay. This Desulforudis audaxviator (strain MP104C) protein is Ribonuclease Y.